The primary structure comprises 144 residues: Group IID secretory phospholipase A2 (144 aa).

A signal peptide spans 1-19 (MRLALLCGLLLAGITATQG). 7 disulfide bridges follow: cysteine 45/cysteine 137, cysteine 47/cysteine 63, cysteine 62/cysteine 117, cysteine 68/cysteine 144, cysteine 69/cysteine 110, cysteine 78/cysteine 103, and cysteine 96/cysteine 108. Ca(2+)-binding residues include histidine 46, glycine 48, and glycine 50. Histidine 66 is a catalytic residue. Aspartate 67 serves as a coordination point for Ca(2+). Residue asparagine 99 is glycosylated (N-linked (GlcNAc...) asparagine). Residue aspartate 111 is part of the active site.

This sequence belongs to the phospholipase A2 family. It depends on Ca(2+) as a cofactor. In terms of tissue distribution, highly expressed in secondary lymphoid tissues, spleen and lymph nodes. Expressed at a lesser extent in thymus. Expressed in CD4-positive, IL2RA/CD25-positive, FOXP3-positive Tregs (at protein level). Expressed in myeloid cell subsets resident in spleen and lymph nodes, ITGAX/CD11C-positive dendritic cells and macrophages (at protein level). Enriched in CD4-positive, ITGAM/CD11B-positive dendritic cell subset. Expressed in pulmonary ITGAX/CD11C-positive dendritic cell subset (at protein level).

The protein resides in the secreted. It localises to the cell membrane. Its subcellular location is the cytoplasm. The enzyme catalyses a 1,2-diacyl-sn-glycero-3-phosphoethanolamine + H2O = a 1-acyl-sn-glycero-3-phosphoethanolamine + a fatty acid + H(+). It catalyses the reaction 1-hexadecanoyl-2-(9Z-octadecenoyl)-sn-glycero-3-phosphoethanolamine + H2O = 1-hexadecanoyl-sn-glycero-3-phosphoethanolamine + (9Z)-octadecenoate + H(+). It carries out the reaction 1-hexadecanoyl-2-(9Z,12Z-octadecadienoyl)-sn-glycero-3-phosphoethanolamine + H2O = 1-hexadecanoyl-sn-glycero-3-phosphoethanolamine + (9Z,12Z)-octadecadienoate + H(+). The catalysed reaction is 1,2-dihexadecanoyl-sn-glycero-3-phospho-(1'-sn-glycerol) + H2O = 1-hexadecanoyl-sn-glycero-3-phospho-(1'-sn-glycerol) + hexadecanoate + H(+). The enzyme catalyses 1-hexadecanoyl-2-(9Z-octadecenoyl)-sn-glycero-3-phospho-(1'-sn-glycerol) + H2O = 1-hexadecanoyl-sn-glycero-3-phospho-(1'-sn-glycerol) + (9Z)-octadecenoate + H(+). It catalyses the reaction a 1,2-diacyl-sn-glycero-3-phosphocholine + H2O = a 1-acyl-sn-glycero-3-phosphocholine + a fatty acid + H(+). It carries out the reaction 1,2-dihexadecanoyl-sn-glycero-3-phosphocholine + H2O = 1-hexadecanoyl-sn-glycero-3-phosphocholine + hexadecanoate + H(+). The catalysed reaction is 1-hexadecanoyl-2-(9Z-octadecenoyl)-sn-glycero-3-phosphocholine + H2O = 1-hexadecanoyl-sn-glycero-3-phosphocholine + (9Z)-octadecenoate + H(+). The enzyme catalyses 1-hexadecanoyl-2-(9Z,12Z-octadecadienoyl)-sn-glycero-3-phosphocholine + H2O = (9Z,12Z)-octadecadienoate + 1-hexadecanoyl-sn-glycero-3-phosphocholine + H(+). It catalyses the reaction 1-hexadecanoyl-2-(4Z,7Z,10Z,13Z,16Z,19Z-docosahexaenoyl)-sn-glycero-3-phosphocholine + H2O = (4Z,7Z,10Z,13Z,16Z,19Z)-docosahexaenoate + 1-hexadecanoyl-sn-glycero-3-phosphocholine + H(+). In terms of biological role, secretory calcium-dependent phospholipase A2 that primarily targets extracellular lipids, exerting anti-inflammatory and immunosuppressive functions. Hydrolyzes the ester bond of the fatty acyl group attached at sn-2 position of phospholipids (phospholipase A2 activity) with preference for phosphatidylethanolamines and phosphatidylglycerols over phosphatidylcholines. In draining lymph nodes, selectively hydrolyzes diacyl and alkenyl forms of phosphatidylethanolamines, releasing omega-3 polyunsaturated fatty acids (PUFAs) such as eicosapentaenoate and docosahexaenoate that are precursors of the anti-inflammatory lipid mediators, resolvins. During the resolution phase of acute inflammation drives docosahexaenoate-derived resolvin D1 synthesis, which suppresses dendritic cell activation and T-helper 1 immune response. May act in an autocrine and paracrine manner. Via a mechanism independent of its catalytic activity, promotes differentiation of regulatory T cells (Tregs) and participates in the maintenance of immune tolerance. May contribute to lipid remodeling of cellular membranes and generation of lipid mediators involved in pathogen clearance. Displays bactericidal activity against Gram-positive bacteria by directly hydrolyzing phospholipids of the bacterial membrane. This chain is Group IID secretory phospholipase A2 (Pla2g2d), found in Mus musculus (Mouse).